The chain runs to 203 residues: Glycerol-3-phosphate acyltransferase (203 aa).

6 helical membrane passes run 3-23 (NLILYAVSYLLGSIPSGLILA), 61-81 (ILTVVCDVLKGVLPLIVASFL), 87-107 (VLWTMAVLSVAGHCFSIFLGF), 118-138 (GVLAFFLPVEIIIALVVWFLV), 144-164 (ISSLASLCALIALIASSFIIH), and 172-192 (THAPILIIAFLVVYKHIPNIV).

It belongs to the PlsY family. In terms of assembly, probably interacts with PlsX.

The protein resides in the cell inner membrane. The enzyme catalyses an acyl phosphate + sn-glycerol 3-phosphate = a 1-acyl-sn-glycero-3-phosphate + phosphate. Its pathway is lipid metabolism; phospholipid metabolism. Its function is as follows. Catalyzes the transfer of an acyl group from acyl-phosphate (acyl-PO(4)) to glycerol-3-phosphate (G3P) to form lysophosphatidic acid (LPA). This enzyme utilizes acyl-phosphate as fatty acyl donor, but not acyl-CoA or acyl-ACP. The polypeptide is Glycerol-3-phosphate acyltransferase (Campylobacter concisus (strain 13826)).